The primary structure comprises 274 residues: 26S proteasome regulatory subunit RPN12 (274 aa).

Residues 76–251 (DSFENYFNQL…KADYEDEMMH (176 aa)) form the PCI domain.

It belongs to the proteasome subunit S14 family.

Its function is as follows. Acts as a regulatory subunit of the 26S proteasome which is involved in the ATP-dependent degradation of ubiquitinated proteins. Necessary for activation of the CDC28 kinase. In Saccharomyces cerevisiae (strain ATCC 204508 / S288c) (Baker's yeast), this protein is 26S proteasome regulatory subunit RPN12 (RPN12).